The chain runs to 361 residues: Peptide chain release factor 1 (361 aa).

An N5-methylglutamine modification is found at Q235.

Belongs to the prokaryotic/mitochondrial release factor family. In terms of processing, methylated by PrmC. Methylation increases the termination efficiency of RF1.

Its subcellular location is the cytoplasm. Peptide chain release factor 1 directs the termination of translation in response to the peptide chain termination codons UAG and UAA. The protein is Peptide chain release factor 1 of Buchnera aphidicola subsp. Acyrthosiphon pisum (strain 5A).